The chain runs to 362 residues: Aminomethyltransferase (362 aa).

The protein belongs to the GcvT family. In terms of assembly, the glycine cleavage system is composed of four proteins: P, T, L and H.

It carries out the reaction N(6)-[(R)-S(8)-aminomethyldihydrolipoyl]-L-lysyl-[protein] + (6S)-5,6,7,8-tetrahydrofolate = N(6)-[(R)-dihydrolipoyl]-L-lysyl-[protein] + (6R)-5,10-methylene-5,6,7,8-tetrahydrofolate + NH4(+). Its function is as follows. The glycine cleavage system catalyzes the degradation of glycine. The chain is Aminomethyltransferase from Listeria monocytogenes serotype 4a (strain HCC23).